Consider the following 657-residue polypeptide: Bifunctional lysine-specific demethylase and histidyl-hydroxylase NO66 (657 aa).

2 disordered regions span residues 1–141 (MQKA…QTSP) and 165–198 (KSCPLPSKKDSVTKSPMTVHEAPKVDSATSNSNE). Residues 32-41 (SAKTVDTVTD) are compositionally biased toward polar residues. Basic and acidic residues predominate over residues 55 to 71 (AEKERRKYLQARVRAEG). 2 stretches are compositionally biased toward polar residues: residues 73–84 (SASTSSKSNATR) and 132–141 (RSQGLEQTSP). Phosphoserine is present on Ser-133. Position 139 is a phosphothreonine (Thr-139). A Phosphoserine modification is found at Ser-140. Positions 315-454 (NPSTYLLGLR…NLLETLMPIV (140 aa)) constitute a JmjC domain. Fe cation is bound by residues His-355, Asp-357, and His-420.

The protein belongs to the ROX family. NO66 subfamily. Fe(2+) serves as cofactor.

The protein localises to the nucleus. The enzyme catalyses N(6),N(6)-dimethyl-L-lysyl(36)-[histone H3] + 2 2-oxoglutarate + 2 O2 = L-lysyl(36)-[histone H3] + 2 formaldehyde + 2 succinate + 2 CO2. Functionally, oxygenase that can act as both a histone lysine demethylase and a ribosomal histidine hydroxylase. Specifically demethylates 'Lys-4' (H3K4me) and 'Lys-36' (H3K36me) of histone H3, thereby playing a central role in histone code. The sequence is that of Bifunctional lysine-specific demethylase and histidyl-hydroxylase NO66 from Drosophila erecta (Fruit fly).